The sequence spans 331 residues: Rho GTPase-activating protein 5 (331 aa).

In terms of domain architecture, CRIB spans 3 to 16; that stretch reads IGGPTNIRHVAHVT. The region spanning 48–225 is the Rho-GAP domain; the sequence is VSTESMQLSY…LLKSLTEKTV (178 aa). Positions 227-251 are enriched in basic and acidic residues; sequence EREASSSVVDRRCSKEAEDGEKEKD. The segment at 227-331 is disordered; it reads EREASSSVVD…VQPPICSSNP (105 aa). The span at 252 to 277 shows a compositional bias: acidic residues; it reads NEEEEEDEEEEEEEEDEDEDEEEEGD.

As to expression, expressed in differentiating xylem cells.

It localises to the cell membrane. Acts as a GTPase activator for the Rac-type GTPase by converting it to an inactive GDP-bound state. This chain is Rho GTPase-activating protein 5 (ROPGAP5), found in Arabidopsis thaliana (Mouse-ear cress).